Consider the following 126-residue polypeptide: Protein ApaG (126 aa).

The region spanning 2–126 (SDPRYQVDVS…FRLAVPGALH (125 aa)) is the ApaG domain.

The protein is Protein ApaG of Pseudomonas fluorescens (strain ATCC BAA-477 / NRRL B-23932 / Pf-5).